The following is a 317-amino-acid chain: Phospho-N-acetylmuramoyl-pentapeptide-transferase (317 aa).

Transmembrane regions (helical) follow at residues 3-23 (VIIY…PLFI), 48-68 (GTPT…MIIM), 72-92 (LNSN…IGLI), 112-132 (FLLQ…RFGS), 141-161 (ITWT…FVAV), 171-191 (LDGL…VVSF), 193-213 (WHQY…LGFL), 238-258 (AIAL…IYVI), and 297-317 (VVSV…LSLI).

It belongs to the glycosyltransferase 4 family. MraY subfamily. Mg(2+) serves as cofactor.

The protein localises to the cell membrane. The catalysed reaction is UDP-N-acetyl-alpha-D-muramoyl-L-alanyl-gamma-D-glutamyl-meso-2,6-diaminopimeloyl-D-alanyl-D-alanine + di-trans,octa-cis-undecaprenyl phosphate = di-trans,octa-cis-undecaprenyl diphospho-N-acetyl-alpha-D-muramoyl-L-alanyl-D-glutamyl-meso-2,6-diaminopimeloyl-D-alanyl-D-alanine + UMP. It functions in the pathway cell wall biogenesis; peptidoglycan biosynthesis. Catalyzes the initial step of the lipid cycle reactions in the biosynthesis of the cell wall peptidoglycan: transfers peptidoglycan precursor phospho-MurNAc-pentapeptide from UDP-MurNAc-pentapeptide onto the lipid carrier undecaprenyl phosphate, yielding undecaprenyl-pyrophosphoryl-MurNAc-pentapeptide, known as lipid I. This Clostridium acetobutylicum (strain ATCC 824 / DSM 792 / JCM 1419 / IAM 19013 / LMG 5710 / NBRC 13948 / NRRL B-527 / VKM B-1787 / 2291 / W) protein is Phospho-N-acetylmuramoyl-pentapeptide-transferase.